The primary structure comprises 217 residues: MKKNEYFNEIEKIYKEMSSHFKERLKEFKNIWENGTNKDIHLELSFCILTPQSKALNAWQAITNLKKDDLIYNGKAEELVEFLNIVRFKNNKSKYLVELREKMMKDGEIITKDFFNTLPTVAEKREWIVKNIKGMSYKEASHFLRNVGFGENIAILDRHILRNLVKLEVIDELPKTLTPKLYLEIEEKMRDYCEFVKIPMDEMDLLLWYKEAGVIFK.

Catalysis depends on residues Lys138 and Asp157.

This sequence belongs to the type-2 OGG1 family.

It catalyses the reaction 2'-deoxyribonucleotide-(2'-deoxyribose 5'-phosphate)-2'-deoxyribonucleotide-DNA = a 3'-end 2'-deoxyribonucleotide-(2,3-dehydro-2,3-deoxyribose 5'-phosphate)-DNA + a 5'-end 5'-phospho-2'-deoxyribonucleoside-DNA + H(+). Functionally, catalyzes the excision of an oxidatively damaged form of guanine (7,8-dihydro-8-oxoguanine = 8-oxoG) from DNA. Also cleaves the DNA backbone at apurinic/apyrimidinic sites (AP sites). In Fusobacterium nucleatum subsp. nucleatum (strain ATCC 25586 / DSM 15643 / BCRC 10681 / CIP 101130 / JCM 8532 / KCTC 2640 / LMG 13131 / VPI 4355), this protein is 8-oxoguanine DNA glycosylase/AP lyase.